Reading from the N-terminus, the 384-residue chain is Mitogen-activated protein kinase homolog 1 (384 aa).

Residues 32–319 (YVPIKPIGRG…VMEALQHPYM (288 aa)) enclose the Protein kinase domain. ATP contacts are provided by residues 38-46 (IGRGAYGIV) and Lys-61. Residue Asp-158 is the Proton acceptor of the active site. At Thr-191 the chain carries Phosphothreonine. Positions 191–193 (TEY) match the TXY motif. A Phosphotyrosine modification is found at Tyr-193.

It belongs to the protein kinase superfamily. CMGC Ser/Thr protein kinase family. MAP kinase subfamily. Requires Mg(2+) as cofactor. In terms of processing, dually phosphorylated on Thr-191 and Tyr-193, which activates the enzyme. In terms of tissue distribution, expressed in vegetative organs such as leaf, root, or stem. In the reproductive organs, it is found in the ovary, but not in the stamen.

The catalysed reaction is L-seryl-[protein] + ATP = O-phospho-L-seryl-[protein] + ADP + H(+). It carries out the reaction L-threonyl-[protein] + ATP = O-phospho-L-threonyl-[protein] + ADP + H(+). With respect to regulation, activated by tyrosine and threonine phosphorylation. This Petunia hybrida (Petunia) protein is Mitogen-activated protein kinase homolog 1 (MPK1).